The following is a 1401-amino-acid chain: MAP kinase kinase kinase wis4 (1401 aa).

Disordered regions lie at residues 67–99 (HIPL…MSYT) and 176–205 (QDSI…NDFS). 2 stretches are compositionally biased toward polar residues: residues 72 to 99 (PSHS…MSYT) and 176 to 191 (QDSI…NQSL). Positions 1037 to 1306 (WQQGHFVRSG…AVDLLTHPWI (270 aa)) constitute a Protein kinase domain. ATP contacts are provided by residues 1043-1051 (VRSGMFGDV) and Lys-1066. Catalysis depends on Asp-1161, which acts as the Proton acceptor.

Belongs to the protein kinase superfamily. STE Ser/Thr protein kinase family. MAP kinase kinase kinase subfamily.

The catalysed reaction is L-seryl-[protein] + ATP = O-phospho-L-seryl-[protein] + ADP + H(+). It catalyses the reaction L-threonyl-[protein] + ATP = O-phospho-L-threonyl-[protein] + ADP + H(+). Functionally, involved in a signal transduction pathway that is activated in under conditions of heat shock, oxidative stress or limited nutrition. Unlike win1, it is not activated by changes in the osmolarity of the extracellular environment. Activates the wis1 MAP kinase kinase by phosphorylation. In Schizosaccharomyces pombe (strain 972 / ATCC 24843) (Fission yeast), this protein is MAP kinase kinase kinase wis4 (wis4).